We begin with the raw amino-acid sequence, 457 residues long: Phosphomethylpyrimidine synthase (457 aa).

Substrate is bound by residues Asn80, Met109, Tyr139, His175, 195 to 197, 236 to 239, and Glu275; these read SRG and DSLR. Zn(2+) is bound at residue His279. Residue Tyr302 coordinates substrate. Zn(2+) is bound at residue His343. Positions 423, 426, and 431 each coordinate [4Fe-4S] cluster.

It belongs to the ThiC family. Requires [4Fe-4S] cluster as cofactor.

It carries out the reaction 5-amino-1-(5-phospho-beta-D-ribosyl)imidazole + S-adenosyl-L-methionine = 4-amino-2-methyl-5-(phosphooxymethyl)pyrimidine + CO + 5'-deoxyadenosine + formate + L-methionine + 3 H(+). The protein operates within cofactor biosynthesis; thiamine diphosphate biosynthesis. Its function is as follows. Catalyzes the synthesis of the hydroxymethylpyrimidine phosphate (HMP-P) moiety of thiamine from aminoimidazole ribotide (AIR) in a radical S-adenosyl-L-methionine (SAM)-dependent reaction. In Trichormus variabilis (strain ATCC 29413 / PCC 7937) (Anabaena variabilis), this protein is Phosphomethylpyrimidine synthase.